The sequence spans 441 residues: Ribosomal protein uS12 methylthiotransferase RimO (441 aa).

The 111-residue stretch at 8–118 (PKIGFVSLGC…VLEHVHHYVP (111 aa)) folds into the MTTase N-terminal domain. Positions 17, 53, 82, 150, 154, and 157 each coordinate [4Fe-4S] cluster. Residues 136–373 (LTPRHYAYLK…MQLQQQISAE (238 aa)) form the Radical SAM core domain. A TRAM domain is found at 376-441 (QEKVGREILV…DEYDLWGSRV (66 aa)).

It belongs to the methylthiotransferase family. RimO subfamily. Requires [4Fe-4S] cluster as cofactor.

The protein localises to the cytoplasm. It catalyses the reaction L-aspartate(89)-[ribosomal protein uS12]-hydrogen + (sulfur carrier)-SH + AH2 + 2 S-adenosyl-L-methionine = 3-methylsulfanyl-L-aspartate(89)-[ribosomal protein uS12]-hydrogen + (sulfur carrier)-H + 5'-deoxyadenosine + L-methionine + A + S-adenosyl-L-homocysteine + 2 H(+). Its function is as follows. Catalyzes the methylthiolation of an aspartic acid residue of ribosomal protein uS12. This chain is Ribosomal protein uS12 methylthiotransferase RimO, found in Shigella boydii serotype 18 (strain CDC 3083-94 / BS512).